The chain runs to 456 residues: Glycerol-3-phosphate acyltransferase 4 (456 aa).

The signal sequence occupies residues 1–37 (MFLLLPFDSLIVSLLGISLTVLFTLLLVFIIVPAVFG). 2 helical membrane passes run 156 to 176 (ISLRLTVLWGLGVLIRYCLLL) and 180 to 200 (IALAFTGISLLVVGTTMVGYL). N-linked (GlcNAc...) asparagine glycosylation is present at asparagine 247. An HXXXXD motif motif is present at residues 248-253 (HTSPID). N-linked (GlcNAc...) asparagine glycans are attached at residues asparagine 327, asparagine 328, and asparagine 362.

The protein belongs to the 1-acyl-sn-glycerol-3-phosphate acyltransferase family.

It localises to the endoplasmic reticulum membrane. It catalyses the reaction sn-glycerol 3-phosphate + an acyl-CoA = a 1-acyl-sn-glycero-3-phosphate + CoA. The catalysed reaction is dodecanoyl-CoA + sn-glycerol 3-phosphate = 1-dodecanoyl-sn-glycerol 3-phosphate + CoA. It carries out the reaction sn-glycerol 3-phosphate + hexadecanoyl-CoA = 1-hexadecanoyl-sn-glycero-3-phosphate + CoA. The enzyme catalyses sn-glycerol 3-phosphate + octadecanoyl-CoA = 1-octadecanoyl-sn-glycero-3-phosphate + CoA. It catalyses the reaction sn-glycerol 3-phosphate + (9Z)-octadecenoyl-CoA = 1-(9Z-octadecenoyl)-sn-glycero-3-phosphate + CoA. The catalysed reaction is (9Z,12Z)-octadecadienoyl-CoA + sn-glycerol 3-phosphate = 1-(9Z,12Z)-octadecadienoyl-sn-glycero-3-phosphate + CoA. It participates in phospholipid metabolism; CDP-diacylglycerol biosynthesis; CDP-diacylglycerol from sn-glycerol 3-phosphate: step 1/3. Its function is as follows. Converts glycerol-3-phosphate to 1-acyl-sn-glycerol-3-phosphate (lysophosphatidic acid or LPA) by incorporating an acyl moiety at the sn-1 position of the glycerol backbone. Active against both saturated and unsaturated long-chain fatty acyl-CoAs. Protects cells against lipotoxicity. The protein is Glycerol-3-phosphate acyltransferase 4 of Bos taurus (Bovine).